Consider the following 216-residue polypeptide: Uracil phosphoribosyltransferase (216 aa).

Residues Arg-81, Arg-106, and 135-143 each bind 5-phospho-alpha-D-ribose 1-diphosphate; that span reads DPMLATGSS. Uracil contacts are provided by residues Ile-200 and 205 to 207; that span reads GDA. Asp-206 lines the 5-phospho-alpha-D-ribose 1-diphosphate pocket.

Belongs to the UPRTase family. It depends on Mg(2+) as a cofactor.

The catalysed reaction is UMP + diphosphate = 5-phospho-alpha-D-ribose 1-diphosphate + uracil. The protein operates within pyrimidine metabolism; UMP biosynthesis via salvage pathway; UMP from uracil: step 1/1. With respect to regulation, allosterically activated by GTP. Its function is as follows. Catalyzes the conversion of uracil and 5-phospho-alpha-D-ribose 1-diphosphate (PRPP) to UMP and diphosphate. The chain is Uracil phosphoribosyltransferase (upp) from Porphyromonas gingivalis (strain ATCC 33277 / DSM 20709 / CIP 103683 / JCM 12257 / NCTC 11834 / 2561).